Here is a 499-residue protein sequence, read N- to C-terminus: Sensor histidine kinase PdtaS (499 aa).

The GAF stretch occupies residues 4-149; it reads LGDLLAEHTM…PLEGAYLDCA (146 aa). Positions 178-289 are PAS-like; that stretch reads DGFIRLNEGG…TEVKRRDRAL (112 aa). Residues 298–493 form the Histidine kinase domain; the sequence is EIHHRVKNNL…DVVLRVPIGR (196 aa). At His301 the chain carries Phosphohistidine; by autocatalysis.

Autophosphorylated.

The protein localises to the cytoplasm. The enzyme catalyses ATP + protein L-histidine = ADP + protein N-phospho-L-histidine.. Functionally, member of the two-component regulatory system PdtaR/PdtaS. This two-component system plays an essential role in mycobacterial adaptation to poor nutrient conditions. Nutrient deprivation results in increasing intracellular concentrations of cyclic diguanosine monophosphate (c-di-GMP), which binds to the PdtaS sensor and promotes its autophosphorylation, leading to the activation of the signaling cascade. The phosphate group is then transferred to PdtaR. The chain is Sensor histidine kinase PdtaS from Mycolicibacterium smegmatis (strain ATCC 700084 / mc(2)155) (Mycobacterium smegmatis).